The primary structure comprises 439 residues: MSVPSALMKQPPIQSTAGAVPVRNEKGEISMEKVKVKRYVSGKRPDYAPMESSDEEDEEFQFIKKAKEQEAEPEEQEEDSSSDPRLRRLQNRISEDVEERLARHRKIVEPEVVGESDSEVEGDAWRMEREDSSEEEEEEIDDEEIERRRGMMRQRAQERKNEEMEVMEVEDEGRSGEESESESEYEEYTDSEDEMEPRLKPVFIRKKDRVTVQEREAEALKQKELEQEAKRMAEERRKYTLKIVEEETKKELEENKRSLAALDALNTDDENDEEEYEAWKVRELKRIKRDREDREALEKEKAEIERMRNLTEEERRAELRANGKVITNKAVKGKYKFLQKYYHRGAFFMDEDEEVYKRDFSAPTLEDHFNKTILPKVMQVKNFGRSGRTKYTHLVDQDTTSFDSAWGQESAQNTKFFKQKAAGVRDVFERPSAKKRKTT.

2 disordered regions span residues 1–27 (MSVP…NEKG) and 39–200 (YVSG…PRLK). Ser2 carries the post-translational modification N-acetylserine. A phosphoserine mark is found at Ser52 and Ser53. Over residues 61-70 (QFIKKAKEQE) the composition is skewed to basic and acidic residues. Lys67 participates in a covalent cross-link: Glycyl lysine isopeptide (Lys-Gly) (interchain with G-Cter in SUMO2). Residues 71–81 (AEPEEQEEDSS) show a composition bias toward acidic residues. Phosphoserine occurs at positions 94, 116, 118, 132, and 133. Acidic residues-rich tracts occupy residues 112–122 (VVGESDSEVEG) and 131–144 (DSSE…DDEE). Positions 145–163 (IERRRGMMRQRAQERKNEE) are enriched in basic and acidic residues. A compositionally biased stretch (acidic residues) spans 178-195 (ESESESEYEEYTDSEDEM). A Glycyl lysine isopeptide (Lys-Gly) (interchain with G-Cter in SUMO2) cross-link involves residue Lys249. Thr267 carries the phosphothreonine modification. Residue Lys357 forms a Glycyl lysine isopeptide (Lys-Gly) (interchain with G-Cter in SUMO2) linkage. The residue at position 361 (Ser361) is a Phosphoserine. Glycyl lysine isopeptide (Lys-Gly) (interchain with G-Cter in SUMO2) cross-links involve residues Lys371, Lys381, Lys415, and Lys418. Residue Ser432 is modified to Phosphoserine.

Belongs to the MFAP1 family. In terms of assembly, component of the spliceosome B complex. Interacts with PRPF38A (via N-terminal interaction domain).

It localises to the nucleus. Functionally, involved in pre-mRNA splicing as a component of the spliceosome. This chain is Microfibrillar-associated protein 1, found in Homo sapiens (Human).